The following is a 101-amino-acid chain: uncharacterized protein (101 aa).

The first 19 residues, 1-19, serve as a signal peptide directing secretion; the sequence is MKFKYLSTPLLFSALLFSA. Residue Cys20 is the site of N-palmitoyl cysteine attachment. Residue Cys20 is the site of S-diacylglycerol cysteine attachment.

This sequence belongs to the MG439/MG440 family.

The protein resides in the cell membrane. This is an uncharacterized protein from Mycoplasma pneumoniae (strain ATCC 29342 / M129 / Subtype 1) (Mycoplasmoides pneumoniae).